Reading from the N-terminus, the 70-residue chain is Cuticle protein 16 isoform b (70 aa).

This is Cuticle protein 16 isoform b from Limulus polyphemus (Atlantic horseshoe crab).